The following is a 361-amino-acid chain: Queuine tRNA-ribosyltransferase (361 aa).

Asp-92 acts as the Proton acceptor in catalysis. Residues 92–96 (DSGGF), Asp-146, Gln-189, and Gly-216 each bind substrate. The segment at 247–253 (GVGKPAD) is RNA binding. Asp-266 serves as the catalytic Nucleophile. An RNA binding; important for wobble base 34 recognition region spans residues 271–275 (TRSGR). Residues Cys-304, Cys-306, Cys-309, and His-335 each contribute to the Zn(2+) site.

The protein belongs to the queuine tRNA-ribosyltransferase family. As to quaternary structure, homodimer. Within each dimer, one monomer is responsible for RNA recognition and catalysis, while the other monomer binds to the replacement base PreQ1. Zn(2+) is required as a cofactor.

The enzyme catalyses 7-aminomethyl-7-carbaguanine + guanosine(34) in tRNA = 7-aminomethyl-7-carbaguanosine(34) in tRNA + guanine. It participates in tRNA modification; tRNA-queuosine biosynthesis. In terms of biological role, catalyzes the base-exchange of a guanine (G) residue with the queuine precursor 7-aminomethyl-7-deazaguanine (PreQ1) at position 34 (anticodon wobble position) in tRNAs with GU(N) anticodons (tRNA-Asp, -Asn, -His and -Tyr). Catalysis occurs through a double-displacement mechanism. The nucleophile active site attacks the C1' of nucleotide 34 to detach the guanine base from the RNA, forming a covalent enzyme-RNA intermediate. The proton acceptor active site deprotonates the incoming PreQ1, allowing a nucleophilic attack on the C1' of the ribose to form the product. After dissociation, two additional enzymatic reactions on the tRNA convert PreQ1 to queuine (Q), resulting in the hypermodified nucleoside queuosine (7-(((4,5-cis-dihydroxy-2-cyclopenten-1-yl)amino)methyl)-7-deazaguanosine). This chain is Queuine tRNA-ribosyltransferase, found in Rickettsia felis (strain ATCC VR-1525 / URRWXCal2) (Rickettsia azadi).